The primary structure comprises 377 residues: Chaperone protein DnaJ (377 aa).

The J domain occupies 5–70 (DYYEVLGVAK…QKRAAYDRYG (66 aa)). The CR-type zinc finger occupies 137 to 215 (GFDTEIRVPS…CDGVGRTRRN (79 aa)). Positions 150, 153, 167, 170, 189, 192, 203, and 206 each coordinate Zn(2+). CXXCXGXG motif repeat units lie at residues 150 to 157 (CDTCHGSG), 167 to 174 (CRTCGGSG), 189 to 196 (CPTCHGTG), and 203 to 210 (CPSCDGVG).

This sequence belongs to the DnaJ family. As to quaternary structure, homodimer. Zn(2+) is required as a cofactor.

It localises to the cytoplasm. In terms of biological role, participates actively in the response to hyperosmotic and heat shock by preventing the aggregation of stress-denatured proteins and by disaggregating proteins, also in an autonomous, DnaK-independent fashion. Unfolded proteins bind initially to DnaJ; upon interaction with the DnaJ-bound protein, DnaK hydrolyzes its bound ATP, resulting in the formation of a stable complex. GrpE releases ADP from DnaK; ATP binding to DnaK triggers the release of the substrate protein, thus completing the reaction cycle. Several rounds of ATP-dependent interactions between DnaJ, DnaK and GrpE are required for fully efficient folding. Also involved, together with DnaK and GrpE, in the DNA replication of plasmids through activation of initiation proteins. This Bordetella parapertussis (strain 12822 / ATCC BAA-587 / NCTC 13253) protein is Chaperone protein DnaJ.